Here is a 178-residue protein sequence, read N- to C-terminus: Large ribosomal subunit protein uL6 (178 aa).

The protein belongs to the universal ribosomal protein uL6 family. As to quaternary structure, part of the 50S ribosomal subunit.

In terms of biological role, this protein binds to the 23S rRNA, and is important in its secondary structure. It is located near the subunit interface in the base of the L7/L12 stalk, and near the tRNA binding site of the peptidyltransferase center. The chain is Large ribosomal subunit protein uL6 from Helicobacter acinonychis (strain Sheeba).